We begin with the raw amino-acid sequence, 106 residues long: Small ribosomal subunit protein uS10 (106 aa).

Belongs to the universal ribosomal protein uS10 family. In terms of assembly, part of the 30S ribosomal subunit.

Its function is as follows. Involved in the binding of tRNA to the ribosomes. The chain is Small ribosomal subunit protein uS10 from Mesomycoplasma hyopneumoniae (strain 232) (Mycoplasma hyopneumoniae).